The following is a 92-amino-acid chain: Small ribosomal subunit protein uS19 (92 aa).

This sequence belongs to the universal ribosomal protein uS19 family.

Protein S19 forms a complex with S13 that binds strongly to the 16S ribosomal RNA. The protein is Small ribosomal subunit protein uS19 of Rickettsia akari (strain Hartford).